Here is a 467-residue protein sequence, read N- to C-terminus: Glutamyl-tRNA(Gln) amidotransferase subunit A (467 aa).

Residues Lys57 and Ser132 each act as charge relay system in the active site. Ser156 functions as the Acyl-ester intermediate in the catalytic mechanism.

The protein belongs to the amidase family. GatA subfamily. As to quaternary structure, heterotrimer of A, B and C subunits.

It carries out the reaction L-glutamyl-tRNA(Gln) + L-glutamine + ATP + H2O = L-glutaminyl-tRNA(Gln) + L-glutamate + ADP + phosphate + H(+). Functionally, allows the formation of correctly charged Gln-tRNA(Gln) through the transamidation of misacylated Glu-tRNA(Gln) in organisms which lack glutaminyl-tRNA synthetase. The reaction takes place in the presence of glutamine and ATP through an activated gamma-phospho-Glu-tRNA(Gln). The polypeptide is Glutamyl-tRNA(Gln) amidotransferase subunit A (Pseudothermotoga lettingae (strain ATCC BAA-301 / DSM 14385 / NBRC 107922 / TMO) (Thermotoga lettingae)).